We begin with the raw amino-acid sequence, 107 residues long: Thioredoxin (107 aa).

The Thioredoxin domain maps to 2–107 (SVEAVVKQVD…GIRELIQANA (106 aa)). Residues Cys34 and Cys37 each act as nucleophile in the active site. Cysteines 34 and 37 form a disulfide.

This sequence belongs to the thioredoxin family.

Functionally, participates in various redox reactions through the reversible oxidation of its active center dithiol to a disulfide and catalyzes dithiol-disulfide exchange reactions. The sequence is that of Thioredoxin (TRX) from Echinococcus granulosus (Hydatid tapeworm).